The following is a 260-amino-acid chain: Peptidase inhibitor 15-A (260 aa).

Residues Met1–Ala21 form the signal peptide. Residues Leu22–Arg62 constitute a propeptide that is removed on maturation. 2 N-linked (GlcNAc...) asparagine glycosylation sites follow: Asn37 and Asn126. The 141-residue stretch at Leu73–Tyr213 folds into the SCP domain.

Belongs to the CRISP family.

Its subcellular location is the secreted. Serine protease inhibitor which displays weak inhibitory activity against trypsin. May play a role in facial patterning during embryonic development. The chain is Peptidase inhibitor 15-A (pi15a) from Danio rerio (Zebrafish).